Consider the following 350-residue polypeptide: Protein RecA (350 aa).

An ATP-binding site is contributed by 68–75; that stretch reads GPESSGKT.

The protein belongs to the RecA family.

It localises to the cytoplasm. Its function is as follows. Can catalyze the hydrolysis of ATP in the presence of single-stranded DNA, the ATP-dependent uptake of single-stranded DNA by duplex DNA, and the ATP-dependent hybridization of homologous single-stranded DNAs. It interacts with LexA causing its activation and leading to its autocatalytic cleavage. The chain is Protein RecA from Mycolicibacterium vanbaalenii (strain DSM 7251 / JCM 13017 / BCRC 16820 / KCTC 9966 / NRRL B-24157 / PYR-1) (Mycobacterium vanbaalenii).